The chain runs to 116 residues: Chondroitin proteoglycan 7 (116 aa).

A signal peptide spans 1–19; it reads MQTITILALIACVAVPIFA. The segment at 29–102 is disordered; sequence DVVESSGEGS…NAVVASDSPK (74 aa). Low complexity-rich tracts occupy residues 32–41 and 48–58; these read ESSGEGSGES and VESSGEGSGES. O-linked (Xyl...) (chondroitin sulfate) serine glycosylation is found at Ser-68, Ser-72, Ser-76, Ser-84, and Ser-88.

This is Chondroitin proteoglycan 7 from Caenorhabditis elegans.